The following is a 32-amino-acid chain: Basic phospholipase A2 (32 aa).

Ca(2+) is bound by residues Tyr-26, Gly-28, and Gly-30.

This sequence belongs to the phospholipase A2 family. Group II subfamily. It depends on Ca(2+) as a cofactor. Expressed by the venom gland.

The protein localises to the secreted. The catalysed reaction is a 1,2-diacyl-sn-glycero-3-phosphocholine + H2O = a 1-acyl-sn-glycero-3-phosphocholine + a fatty acid + H(+). Its function is as follows. Snake venom phospholipase A2 (PLA2) that inhibits neuromuscular transmission by blocking acetylcholine release from the nerve termini. PLA2 catalyzes the calcium-dependent hydrolysis of the 2-acyl groups in 3-sn-phosphoglycerides. This Gloydius halys (Chinese water mocassin) protein is Basic phospholipase A2.